The chain runs to 95 residues: Small ribosomal subunit protein bS6 (95 aa).

This sequence belongs to the bacterial ribosomal protein bS6 family.

Functionally, binds together with bS18 to 16S ribosomal RNA. This is Small ribosomal subunit protein bS6 from Rhodococcus jostii (strain RHA1).